We begin with the raw amino-acid sequence, 61 residues long: Short neurotoxin 1 (61 aa).

Positions 1 to 16 (MECHNQQSSQPPTTKT) are enriched in polar residues. The interval 1–20 (MECHNQQSSQPPTTKTCPGE) is disordered. 4 cysteine pairs are disulfide-bonded: cysteine 3–cysteine 23, cysteine 17–cysteine 40, cysteine 42–cysteine 53, and cysteine 54–cysteine 59.

Belongs to the three-finger toxin family. Short-chain subfamily. Type I alpha-neurotoxin sub-subfamily. Expressed by the venom gland.

The protein localises to the secreted. In terms of biological role, binds to muscle nicotinic acetylcholine receptor (nAChR) and inhibit acetylcholine from binding to the receptor, thereby impairing neuromuscular transmission. The chain is Short neurotoxin 1 from Naja melanoleuca (Forest cobra).